Here is a 283-residue protein sequence, read N- to C-terminus: Probable endonuclease 4 (283 aa).

Residues H66, H106, E141, D174, H177, H211, D224, H226, and E256 each coordinate Zn(2+).

Belongs to the AP endonuclease 2 family. Requires Zn(2+) as cofactor.

The enzyme catalyses Endonucleolytic cleavage to 5'-phosphooligonucleotide end-products.. Its function is as follows. Endonuclease IV plays a role in DNA repair. It cleaves phosphodiester bonds at apurinic or apyrimidinic (AP) sites, generating a 3'-hydroxyl group and a 5'-terminal sugar phosphate. In Carboxydothermus hydrogenoformans (strain ATCC BAA-161 / DSM 6008 / Z-2901), this protein is Probable endonuclease 4.